The chain runs to 425 residues: Glutamate-1-semialdehyde 2,1-aminomutase (425 aa).

Residue Lys-265 is modified to N6-(pyridoxal phosphate)lysine.

The protein belongs to the class-III pyridoxal-phosphate-dependent aminotransferase family. HemL subfamily. As to quaternary structure, homodimer. Pyridoxal 5'-phosphate is required as a cofactor.

The protein localises to the cytoplasm. The enzyme catalyses (S)-4-amino-5-oxopentanoate = 5-aminolevulinate. It participates in porphyrin-containing compound metabolism; protoporphyrin-IX biosynthesis; 5-aminolevulinate from L-glutamyl-tRNA(Glu): step 2/2. The chain is Glutamate-1-semialdehyde 2,1-aminomutase from Nitrosospira multiformis (strain ATCC 25196 / NCIMB 11849 / C 71).